The primary structure comprises 251 residues: uncharacterized protein (251 aa).

The next 5 helical transmembrane spans lie at 22-42, 86-106, 120-140, 157-177, and 205-225; these read FLGV…DIVI, FFLS…VILA, LASS…AGIV, LGYF…IPYV, and IVAW…SFLA.

The protein localises to the cell membrane. This is an uncharacterized protein from Mycoplasma pneumoniae (strain ATCC 29342 / M129 / Subtype 1) (Mycoplasmoides pneumoniae).